The primary structure comprises 935 residues: Progesterone receptor (935 aa).

The AF3; mediates transcriptional activation stretch occupies residues 1–164; the sequence is MTELKAKGPR…PATQRVLSPL (164 aa). The disordered stretch occupies residues 1-256; the sequence is MTELKAKGPR…AAAGGGAAAV (256 aa). The tract at residues 1 to 568 is modulating, Pro-Rich; it reads MTELKAKGPR…YSFESLPQKI (568 aa). S20 bears the Phosphoserine mark. Residues 55-59 carry the LXXL motif 1 motif; it reads LDGLL. The residue at position 81 (S81) is a Phosphoserine. The short motif at 115-119 is the LXXL motif 2 element; that stretch reads LDTLL. 2 positions are modified to phosphoserine: S130 and S162. Residues 165-305 are mediates transcriptional transrepression; sequence MSRSGGKAGD…LATTTMDFTH (141 aa). A Nuclear localization signal motif is present at residues 183-187; it reads KVLPR. A phosphoserine mark is found at S190 and S213. Residues 220 to 231 are compositionally biased toward acidic residues; the sequence is EVEEEDGSESED. Positions 232 to 246 are enriched in low complexity; sequence SAGPLLKGKPRALGG. A Phosphoserine; by MAPK1 modification is found at S294. Residues 328-353 form a disordered region; that stretch reads SYDGGAGAASAFAPPRSSPSASSTPV. Low complexity predominate over residues 335–350; sequence AASAFAPPRSSPSASS. Position 345 is a phosphoserine; by MAPK (S345). K388 participates in a covalent cross-link: Glycyl lysine isopeptide (Lys-Gly) (interchain with G-Cter in SUMO); alternate. K388 participates in a covalent cross-link: Glycyl lysine isopeptide (Lys-Gly) (interchain with G-Cter in ubiquitin); alternate. S400 carries the phosphoserine; by CDK2 modification. A disordered region spans residues 415–452; that stretch reads PDFPLGPPPPLPPRAPPSRPGEAAVTAAPAGASVSSAS. The segment covering 418-433 has biased composition (pro residues); it reads PLGPPPPLPPRAPPSR. Over residues 434-452 the composition is skewed to low complexity; that stretch reads PGEAAVTAAPAGASVSSAS. An AF1; mediates transcriptional activation region spans residues 456–548; that stretch reads STLECILYKA…VYPPYLNYLR (93 aa). K533 participates in a covalent cross-link: Glycyl lysine isopeptide (Lys-Gly) (interchain with G-Cter in SUMO). NR C4-type zinc fingers lie at residues 569–589 and 605–629; these read CLICGDEASGCHYGVLTCGSC and CAGRNDCIVDKIRRKNCPACRLRKC. Residues 569-641 constitute a DNA-binding region (nuclear receptor); sequence CLICGDEASG…AGMVLGGRKF (73 aa). S678 is modified (phosphoserine). Residues 681–915 form the NR LBD domain; it reads QDIQLIPPLI…EFPEMMSEVI (235 aa). Residues 689 to 935 form an AF2; mediates transcriptional activation region; it reads LINLLVSIEP…MVKPLLFHKK (247 aa). R768 serves as a coordination point for progesterone.

The protein belongs to the nuclear hormone receptor family. Interacts with SMARD1 and UNC45A. Interacts with CUEDC2; the interaction promotes ubiquitination, decreases sumoylation, and represses transcriptional activity. Interacts with PIAS3; the interaction promotes sumoylation of PR in a hormone-dependent manner, inhibits DNA-binding, and alters nuclear export. Interacts with SP1; the interaction requires ligand-induced phosphorylation on Ser-345 by ERK1/2-MAPK. Interacts with PRMT2. Interacts with NCOA2 and NCOA1. Interacts with KLF9. Interacts with GTF2B. In terms of processing, phosphorylated on multiple serine sites. Several of these sites are hormone-dependent. Phosphorylation on Ser-294 is highly hormone-dependent and modulates ubiquitination and sumoylation on Lys-388. Phosphorylation on Ser-345 also requires induction by hormone. Basal phosphorylation on Ser-81, Ser-162, Ser-190 and Ser-400 is increased in response to progesterone and can be phosphorylated in vitro by the CDK2-A1 complex. Increased levels of phosphorylation on Ser-400 also in the presence of EGF, heregulin, IGF, PMA and FBS. Phosphorylation at this site by CDK2 is ligand-independent, and increases nuclear translocation and transcriptional activity. Phosphorylation at Ser-162 and Ser-294, but not at Ser-190, is impaired during the G(2)/M phase of the cell cycle. Phosphorylation on Ser-345 by ERK1/2 MAPK is required for interaction with SP1. Sumoylation is hormone-dependent and represses transcriptional activity. Sumoylation on all three sites is enhanced by PIAS3. Desumoylated by SENP1. Sumoylation on Lys-388, the main site of sumoylation, is repressed by ubiquitination on the same site, and modulated by phosphorylation at Ser-294. Post-translationally, ubiquitination is hormone-dependent and represses sumoylation on the same site. Promoted by MAPK-mediated phosphorylation on Ser-294. Ubiquitinated by UBR5, leading to its degradation: UBR5 specifically recognizes and binds ligand-bound PGR when it is not associated with coactivators (NCOAs). In presence of NCOAs, the UBR5-degron is not accessible, preventing its ubiquitination and degradation. In terms of processing, palmitoylated by ZDHHC7 and ZDHHC21. Palmitoylation is required for plasma membrane targeting and for rapid intracellular signaling via ERK and AKT kinases and cAMP generation.

It is found in the nucleus. The protein resides in the cytoplasm. In terms of biological role, the steroid hormones and their receptors are involved in the regulation of eukaryotic gene expression and affect cellular proliferation and differentiation in target tissues. Transcriptional activator of several progesteron-dependent promoters in a variety of cell types. Involved in activation of SRC-dependent MAPK signaling on hormone stimulation. In Macaca sylvanus (Barbary macaque), this protein is Progesterone receptor (PGR).